The primary structure comprises 1397 residues: ABC transporter B family member 2 (1397 aa).

A disordered region spans residues 1–117 (MSDKSNDGGE…KLDEGEKKEG (117 aa)). Residues 24–39 (IDDENNNDINNQDDNE) are compositionally biased toward acidic residues. Residues 37–69 (DNENNNNNNNNKNSDDNEENLKDYKNKKEDFGN) adopt a coiled-coil conformation. 2 stretches are compositionally biased toward basic and acidic residues: residues 49–79 (NSDDNEENLKDYKNKKEDFGNIKMDTIDDRP) and 107–117 (KKLDEGEKKEG). The next 5 membrane-spanning stretches (helical) occupy residues 137–157 (ILLMIIGTIGALANGVSMPAI), 191–211 (FIYIGCGVFVCSYVEVAFWML), 273–293 (FICGFIVGFVNGWQLTLVIFA), 369–389 (GIGIGLVFLVLFGTYSLSFWY), and 407–427 (WQGGDVLTVFFSVIMGAMALG). An ABC transmembrane type-1 1 domain is found at 140-438 (MIIGTIGALA…ASPNVASFAN (299 aa)). The region spanning 474–710 (IEYRNIGFSY…NGVYTQLVNR (237 aa)) is the ABC transporter 1 domain. 509 to 516 (GDSGGGKS) contributes to the ATP binding site. 2 disordered regions span residues 710–744 (RQQKGGDDGDKKKKKKSKESSKDESNNNIGPSSIS) and 763–783 (GLVNDNDNKKKKKKEKKPQEK). Residues 735 to 744 (NNNIGPSSIS) are compositionally biased toward low complexity. Helical transmembrane passes span 801–821 (FLIGLVGATLNGAIMPVFSII), 846–866 (LWFILLAVVAALANFIQIYCF), 922–942 (LGLLIQNIVTIVAGLVIAFVS), 948–968 (LVVLACVPVIGFAGKVEMDFF), 1028–1048 (GLSFGFSQCTLFFIYTLTYWY), and 1101–1121 (VFFAIIMSAMGVGQSMAFMPD). Residues 801-1124 (FLIGLVGATL…SMAFMPDLGK (324 aa)) enclose the ABC transmembrane type-1 2 domain. The region spanning 1159–1395 (IEFKDIKFSY…NGFYAELVSR (237 aa)) is the ABC transporter 2 domain. 1194–1201 (GNSGGGKS) contributes to the ATP binding site.

Belongs to the ABC transporter superfamily. ABCB family. Multidrug resistance exporter (TC 3.A.1.201) subfamily.

The protein localises to the membrane. The protein is ABC transporter B family member 2 (abcB2) of Dictyostelium discoideum (Social amoeba).